We begin with the raw amino-acid sequence, 280 residues long: Polyamine aminopropyltransferase 1 (280 aa).

Residues 3 to 237 (DIVFIERDPY…YWWTFSIASK (235 aa)) enclose the PABS domain. Q33 lines the S-methyl-5'-thioadenosine pocket. Spermidine-binding residues include H64 and D88. S-methyl-5'-thioadenosine is bound by residues D108 and 139-140 (DG). The active-site Proton acceptor is D157. 157–160 (DSTD) contributes to the spermidine binding site.

Belongs to the spermidine/spermine synthase family. Homodimer or homotetramer.

The protein resides in the cytoplasm. It catalyses the reaction S-adenosyl 3-(methylsulfanyl)propylamine + putrescine = S-methyl-5'-thioadenosine + spermidine + H(+). It participates in amine and polyamine biosynthesis; spermidine biosynthesis; spermidine from putrescine: step 1/1. In terms of biological role, catalyzes the irreversible transfer of a propylamine group from the amino donor S-adenosylmethioninamine (decarboxy-AdoMet) to putrescine (1,4-diaminobutane) to yield spermidine. This Aquifex aeolicus (strain VF5) protein is Polyamine aminopropyltransferase 1.